Consider the following 312-residue polypeptide: Malate dehydrogenase (312 aa).

Residues 7–13 (GAAGGIG) and Asp-34 contribute to the NAD(+) site. The substrate site is built by Arg-81 and Arg-87. Residues Asn-94 and 117–119 (ITN) contribute to the NAD(+) site. Substrate-binding residues include Asn-119 and Arg-153. His-177 functions as the Proton acceptor in the catalytic mechanism. Met-227 contacts NAD(+).

Belongs to the LDH/MDH superfamily. MDH type 1 family. Homodimer.

It catalyses the reaction (S)-malate + NAD(+) = oxaloacetate + NADH + H(+). Its function is as follows. Catalyzes the reversible oxidation of malate to oxaloacetate. This chain is Malate dehydrogenase, found in Edwardsiella ictaluri (strain 93-146).